A 142-amino-acid polypeptide reads, in one-letter code: Serine protease inhibitor (142 aa).

Position 1 is an N-acetylserine (Ser-1).

Its function is as follows. Serine protease inhibitor. Active against beta-trypsin and alpha-chymotrypsin with dissociation constants of 0.35 nM and 40 nM respectively. Inhibits factor XIa, but not other enzymes involved in coagulation and fibrinolysis. Does not inhibit subtilisin, lysyl endopeptidase, arginyl endopeptidase or papain. In Lentinula edodes (Shiitake mushroom), this protein is Serine protease inhibitor.